Consider the following 308-residue polypeptide: MKITPIAFESLGVRSQATLIETKDLRVLVDPAISLAPRRYNLPPHQREVDRLTELAKVLVDVAKDVDVIIVSHYHYDHHDPGYVIPTDIYKNKLVFIKDPQNMINNSQKYRRAPRFLRSIKDKPSKIEIADGKTLELGHTTISFSPAVPHGADERLGYVIQVAISDKDSTVIFTSDIEGAPKDVHLKFTKEKMPKTIIIDGPLSYLLGRVLKEEELEKSIRNMEEIVKNGLETVIIDHHVLRDINYAEVLKPVYDIAKDLGVRVTTAAEYLNLEPLILEARRKELFKEDNRPARIPRGLANLLSAGEG.

The protein belongs to the UPF0282 family.

The protein is UPF0282 protein YG5714_2245 of Saccharolobus islandicus (strain Y.G.57.14 / Yellowstone #1) (Sulfolobus islandicus).